The primary structure comprises 59 residues: Anti-inflammatory peptide amregulin (59 aa).

A signal peptide spans 1–19 (MKLHMLNMLNCLLLTVCDG).

Salivary glands.

Its subcellular location is the secreted. In terms of biological role, anti-inflammatory peptide that may facilitate successful blood feeding of ticks and may lead to immunotolerance in its host. Inhibits the secretion of inflammatory factors in rat splenocytes, such as tumor necrosis factor-alpha (TNF), interleukin-1, interleukin-8 (CXCL8) and interferon-gamma (IFNG). In addition, shows strong free radical scavenging and antioxidant activities in vitro. In vivo, inhibits adjuvant-induced paw inflammation in mouse models. In Amblyomma variegatum (Tropical bont tick), this protein is Anti-inflammatory peptide amregulin.